The following is a 206-amino-acid chain: Ribosomal RNA large subunit methyltransferase E (206 aa).

S-adenosyl-L-methionine contacts are provided by glycine 60, tryptophan 62, aspartate 80, aspartate 96, and aspartate 121. The active-site Proton acceptor is lysine 161.

The protein belongs to the class I-like SAM-binding methyltransferase superfamily. RNA methyltransferase RlmE family.

It localises to the cytoplasm. It carries out the reaction uridine(2552) in 23S rRNA + S-adenosyl-L-methionine = 2'-O-methyluridine(2552) in 23S rRNA + S-adenosyl-L-homocysteine + H(+). In terms of biological role, specifically methylates the uridine in position 2552 of 23S rRNA at the 2'-O position of the ribose in the fully assembled 50S ribosomal subunit. This Legionella pneumophila (strain Lens) protein is Ribosomal RNA large subunit methyltransferase E.